The chain runs to 321 residues: Lipoyl synthase (321 aa).

Cys-68, Cys-73, Cys-79, Cys-94, Cys-98, Cys-101, and Ser-308 together coordinate [4Fe-4S] cluster. One can recognise a Radical SAM core domain in the interval 80 to 297; sequence FNHGTATFMI…KAIALDLGFT (218 aa).

It belongs to the radical SAM superfamily. Lipoyl synthase family. [4Fe-4S] cluster serves as cofactor.

It localises to the cytoplasm. The enzyme catalyses [[Fe-S] cluster scaffold protein carrying a second [4Fe-4S](2+) cluster] + N(6)-octanoyl-L-lysyl-[protein] + 2 oxidized [2Fe-2S]-[ferredoxin] + 2 S-adenosyl-L-methionine + 4 H(+) = [[Fe-S] cluster scaffold protein] + N(6)-[(R)-dihydrolipoyl]-L-lysyl-[protein] + 4 Fe(3+) + 2 hydrogen sulfide + 2 5'-deoxyadenosine + 2 L-methionine + 2 reduced [2Fe-2S]-[ferredoxin]. It participates in protein modification; protein lipoylation via endogenous pathway; protein N(6)-(lipoyl)lysine from octanoyl-[acyl-carrier-protein]: step 2/2. Catalyzes the radical-mediated insertion of two sulfur atoms into the C-6 and C-8 positions of the octanoyl moiety bound to the lipoyl domains of lipoate-dependent enzymes, thereby converting the octanoylated domains into lipoylated derivatives. This chain is Lipoyl synthase, found in Tolumonas auensis (strain DSM 9187 / NBRC 110442 / TA 4).